We begin with the raw amino-acid sequence, 705 residues long: UvrABC system protein C (705 aa).

In terms of domain architecture, GIY-YIG spans 16-95 (ETPGVYRFRD…IKQFDPRFNV (80 aa)). The 36-residue stretch at 208 to 243 (GRYLRRLEREMQQAAQAQEYERAARLRDDIGALRRA) folds into the UVR domain. Over residues 315–332 (AASTGTAGSTVPTTTAGS) the composition is skewed to low complexity. Disordered stretches follow at residues 315-335 (AAST…SQGE) and 683-705 (RADA…ETVS).

This sequence belongs to the UvrC family. In terms of assembly, interacts with UvrB in an incision complex.

The protein localises to the cytoplasm. In terms of biological role, the UvrABC repair system catalyzes the recognition and processing of DNA lesions. UvrC both incises the 5' and 3' sides of the lesion. The N-terminal half is responsible for the 3' incision and the C-terminal half is responsible for the 5' incision. In Frankia casuarinae (strain DSM 45818 / CECT 9043 / HFP020203 / CcI3), this protein is UvrABC system protein C.